Reading from the N-terminus, the 330-residue chain is Phosphate acyltransferase (330 aa).

The protein belongs to the PlsX family. As to quaternary structure, homodimer. Probably interacts with PlsY.

The protein resides in the cytoplasm. It carries out the reaction a fatty acyl-[ACP] + phosphate = an acyl phosphate + holo-[ACP]. It functions in the pathway lipid metabolism; phospholipid metabolism. Functionally, catalyzes the reversible formation of acyl-phosphate (acyl-PO(4)) from acyl-[acyl-carrier-protein] (acyl-ACP). This enzyme utilizes acyl-ACP as fatty acyl donor, but not acyl-CoA. This Streptococcus pneumoniae serotype 2 (strain D39 / NCTC 7466) protein is Phosphate acyltransferase.